Here is a 445-residue protein sequence, read N- to C-terminus: Phosphoglucosamine mutase (445 aa).

S102 functions as the Phosphoserine intermediate in the catalytic mechanism. Mg(2+) contacts are provided by S102, D241, D243, and D245. A Phosphoserine modification is found at S102.

Belongs to the phosphohexose mutase family. Mg(2+) is required as a cofactor. Activated by phosphorylation.

The enzyme catalyses alpha-D-glucosamine 1-phosphate = D-glucosamine 6-phosphate. Its function is as follows. Catalyzes the conversion of glucosamine-6-phosphate to glucosamine-1-phosphate. This Edwardsiella ictaluri (strain 93-146) protein is Phosphoglucosamine mutase.